Consider the following 487-residue polypeptide: MKALDELVFDNRFARLGDAFSTHVLPEPIDAPRLVVASESALALLDLAPEQSELPLFAEIFSGHKLWAEAEPRAMVYSGHQFGSYNPRLGDGRGLLLGEVYNDAGEHWDLHLKGAGRTPYSRMGDGRAVLRSSIREFLASEALHALGIPSSRAACVVSSNTPVWREKQEYAAMVLRLAQSHVRFGSLEYLFYTKQPEHLKTLAEHVLTMHYPHCQEQPEPYLAMFREIVERNAELIAKWQAYGFCHGVMNTDNMSILGITFDFGPFAFLDDFDEHFICNHSDHEGRYSFSNQVPIAQWNLSALGQALTPFVSVEALRETIGLFLPLYQAHYLDLMRRRLGLTVAQDQDDKLVSQLLQLMQNSGVDYTLFFRRLGDQPAAQALRALRDDFVDIKVFDDWAQAYQARIAAEENGTEQARKERMHAVNPLYILRNYLAQNAIEAAEKGDYEEVRRLHQVLCTPFTEQPGMEGYAQRPPDWGKHLEISCSS.

ATP-binding residues include Gly90, Gly92, Arg93, Lys113, Asp125, Gly126, Arg176, and Arg183. The active-site Proton acceptor is the Asp252. Mg(2+) contacts are provided by Asn253 and Asp262. Asp262 is an ATP binding site.

The protein belongs to the SELO family. Requires Mg(2+) as cofactor. It depends on Mn(2+) as a cofactor.

The catalysed reaction is L-seryl-[protein] + ATP = 3-O-(5'-adenylyl)-L-seryl-[protein] + diphosphate. The enzyme catalyses L-threonyl-[protein] + ATP = 3-O-(5'-adenylyl)-L-threonyl-[protein] + diphosphate. It catalyses the reaction L-tyrosyl-[protein] + ATP = O-(5'-adenylyl)-L-tyrosyl-[protein] + diphosphate. It carries out the reaction L-histidyl-[protein] + UTP = N(tele)-(5'-uridylyl)-L-histidyl-[protein] + diphosphate. The catalysed reaction is L-seryl-[protein] + UTP = O-(5'-uridylyl)-L-seryl-[protein] + diphosphate. The enzyme catalyses L-tyrosyl-[protein] + UTP = O-(5'-uridylyl)-L-tyrosyl-[protein] + diphosphate. In terms of biological role, nucleotidyltransferase involved in the post-translational modification of proteins. It can catalyze the addition of adenosine monophosphate (AMP) or uridine monophosphate (UMP) to a protein, resulting in modifications known as AMPylation and UMPylation. The chain is Protein nucleotidyltransferase YdiU from Pseudomonas syringae pv. tomato (strain ATCC BAA-871 / DC3000).